We begin with the raw amino-acid sequence, 400 residues long: Large envelope protein (400 aa).

Methionine 1 is modified (N-acetylmethionine). Glycine 2 is lipidated: N-myristoyl glycine; by host. Residues glycine 2 to alanine 119 are pre-S1. The interval glycine 2 to asparagine 174 is pre-S. Over glycine 2–glycine 181 the chain is Virion surface; in external conformation. Residues glycine 2–arginine 253 are Intravirion; in internal conformation-facing. A glycan (N-linked (GlcNAc...) asparagine) is linked at tryptophan 4. Disordered stretches follow at residues glutamine 29–aspartate 50 and leucine 85–glutamine 118. Polar residues predominate over residues serine 96–threonine 106. The tract at residues methionine 120–asparagine 174 is pre-S2. Residues leucine 182–isoleucine 202 traverse the membrane as a helical segment. Residues proline 203–arginine 253 lie on the Intravirion; in external conformation side of the membrane. A helical membrane pass occupies residues phenylalanine 254–cysteine 274. Over glutamine 275 to serine 348 the chain is Virion surface. Asparagine 320 is a glycosylation site (N-linked (GlcNAc...) asparagine; by host). Residues leucine 349–isoleucine 369 traverse the membrane as a helical segment. Topologically, residues tryptophan 370–tryptophan 375 are intravirion. The chain crosses the membrane as a helical span at residues glycine 376 to valine 398. Over tyrosine 399–isoleucine 400 the chain is Virion surface.

This sequence belongs to the orthohepadnavirus major surface antigen family. Interacts (via its myristoylated pre-S1 region) with the host SLC10A1/NTCP; this interaction is essential for viral entry. In terms of assembly, in its internal form (Li-HBsAg), interacts with the capsid protein and with the isoform S. Interacts with host chaperone CANX. As to quaternary structure, associates with host chaperone CANX through its pre-S2 N glycan; this association may be essential for isoform M proper secretion. Interacts with isoform L. Interacts with the antigens of satellite virus HDV (HDVAgs); this interaction is required for encapsidation of HDV genomic RNA. In terms of processing, isoform M is N-terminally acetylated by host at a ratio of 90%, and N-glycosylated by host at the pre-S2 region. Myristoylated; this modification is essential for its interaction with the host protein SLC10A1/NTCP.

It is found in the virion membrane. Its function is as follows. The large envelope protein exists in two topological conformations, one which is termed 'external' or Le-HBsAg and the other 'internal' or Li-HBsAg. In its external conformation the protein attaches the virus to cell receptors and thereby initiating infection. This interaction determines the species specificity and liver tropism. This attachment induces virion internalization predominantly through caveolin-mediated endocytosis. The large envelope protein also assures fusion between virion membrane and endosomal membrane. In its internal conformation the protein plays a role in virion morphogenesis and mediates the contact with the nucleocapsid like a matrix protein. The middle envelope protein plays an important role in the budding of the virion. It is involved in the induction of budding in a nucleocapsid independent way. In this process the majority of envelope proteins bud to form subviral lipoprotein particles of 22 nm of diameter that do not contain a nucleocapsid. The protein is Large envelope protein of Homo sapiens (Human).